Consider the following 307-residue polypeptide: Ethylmalonyl-CoA decarboxylase (307 aa).

Ala2 is subject to N-acetylalanine. Lys217 carries the post-translational modification N6-acetyllysine; alternate. Lys217 carries the N6-succinyllysine; alternate modification. Residue Lys301 is modified to N6-succinyllysine.

Belongs to the enoyl-CoA hydratase/isomerase family.

It is found in the cytoplasm. Its subcellular location is the cytosol. It catalyses the reaction (2S)-ethylmalonyl-CoA + H(+) = butanoyl-CoA + CO2. The catalysed reaction is (S)-methylmalonyl-CoA + H(+) = propanoyl-CoA + CO2. The enzyme catalyses (2R)-ethylmalonyl-CoA + H(+) = butanoyl-CoA + CO2. Decarboxylates ethylmalonyl-CoA, a potentially toxic metabolite, to form butyryl-CoA, suggesting it might be involved in metabolite proofreading. Acts preferentially on (S)-ethylmalonyl-CoA but also has some activity on the (R)-isomer. Also has methylmalonyl-CoA decarboxylase activity at lower level. This chain is Ethylmalonyl-CoA decarboxylase (ECHDC1), found in Homo sapiens (Human).